The sequence spans 178 residues: Glutamyl-tRNA(Gln) amidotransferase subunit C, mitochondrial (178 aa).

The transit peptide at 1–31 (MFRHIFTLGPRSISAITVRSRRALSSTAKPV) directs the protein to the mitochondrion. The interval 26 to 67 (STAKPVSAPVTSDDRPNLDVKHLKHPTKVPQQPHKSDIDRRQ) is disordered. Residues 37-46 (SDDRPNLDVK) are compositionally biased toward basic and acidic residues.

Belongs to the GatC family. Subunit of the heterotrimeric GatCAB amidotransferase (AdT) complex, composed of A, B and C subunits.

The protein resides in the mitochondrion. The catalysed reaction is L-glutamyl-tRNA(Gln) + L-glutamine + ATP + H2O = L-glutaminyl-tRNA(Gln) + L-glutamate + ADP + phosphate + H(+). Allows the formation of correctly charged Gln-tRNA(Gln) through the transamidation of misacylated Glu-tRNA(Gln) in the mitochondria. The reaction takes place in the presence of glutamine and ATP through an activated gamma-phospho-Glu-tRNA(Gln). The sequence is that of Glutamyl-tRNA(Gln) amidotransferase subunit C, mitochondrial from Aedes aegypti (Yellowfever mosquito).